A 107-amino-acid chain; its full sequence is Nucleoid-associated protein RF_1365 (107 aa).

The protein belongs to the YbaB/EbfC family. Homodimer.

It is found in the cytoplasm. The protein localises to the nucleoid. Its function is as follows. Binds to DNA and alters its conformation. May be involved in regulation of gene expression, nucleoid organization and DNA protection. The chain is Nucleoid-associated protein RF_1365 from Rickettsia felis (strain ATCC VR-1525 / URRWXCal2) (Rickettsia azadi).